Here is a 231-residue protein sequence, read N- to C-terminus: Septum site-determining protein MinC (231 aa).

This sequence belongs to the MinC family. In terms of assembly, interacts with MinD and FtsZ.

Its function is as follows. Cell division inhibitor that blocks the formation of polar Z ring septums. Rapidly oscillates between the poles of the cell to destabilize FtsZ filaments that have formed before they mature into polar Z rings. Prevents FtsZ polymerization. The protein is Septum site-determining protein MinC of Shigella flexneri.